The primary structure comprises 157 residues: MKKKANRLDAIKMIISSKEVGSQEELLQELGQEGFELTQATLSRDLKQLKVAKAASMNGRYVYVLPNDIMYKRVGDQSASEMLMNNGFISLQFSGNIAVIKTRPGYASSMAYDIDNRESDTILGTIAGDDTIMLVLREGATPTAVRHFLSLIIPNIN.

It belongs to the ArgR family.

The protein resides in the cytoplasm. The protein operates within amino-acid biosynthesis; L-arginine biosynthesis [regulation]. Regulates arginine biosynthesis genes. The polypeptide is Arginine repressor (Bacteroides fragilis (strain ATCC 25285 / DSM 2151 / CCUG 4856 / JCM 11019 / LMG 10263 / NCTC 9343 / Onslow / VPI 2553 / EN-2)).